Here is a 109-residue protein sequence, read N- to C-terminus: uncharacterized protein (109 aa).

Transmembrane regions (helical) follow at residues 19 to 39 and 53 to 73; these read LELV…CLIP and YFID…FYPF.

The protein resides in the membrane. This is an uncharacterized protein from Saccharomyces cerevisiae (strain ATCC 204508 / S288c) (Baker's yeast).